Consider the following 106-residue polypeptide: MIVTTTQHIEGKKIIAYKGVIAGEAILGANLFKDLFAGIRDMVGGRSGTYERELERARTIAFQELEQKARELGANAIVGVDIDYEVLGQSNGMLMVSASGTAVVIE.

Belongs to the UPF0145 family.

This chain is UPF0145 protein VV2_1464, found in Vibrio vulnificus (strain CMCP6).